We begin with the raw amino-acid sequence, 581 residues long: Arginine--tRNA ligase (581 aa).

The 'HIGH' region motif lies at 126-136 (PNLAKEMHVGH).

Belongs to the class-I aminoacyl-tRNA synthetase family. As to quaternary structure, monomer.

The protein resides in the cytoplasm. It carries out the reaction tRNA(Arg) + L-arginine + ATP = L-arginyl-tRNA(Arg) + AMP + diphosphate. The chain is Arginine--tRNA ligase from Shewanella loihica (strain ATCC BAA-1088 / PV-4).